The chain runs to 205 residues: Probable GTP-binding protein EngB (205 aa).

Positions 22 to 196 (NLPEVAFVGR…LKVLDEFIHK (175 aa)) constitute an EngB-type G domain. GTP contacts are provided by residues 30-37 (GRSNVGKS), 57-61 (GRTQL), 76-79 (DLPG), 143-146 (TKVD), and 175-177 (FSA). Residues serine 37 and threonine 59 each coordinate Mg(2+).

Belongs to the TRAFAC class TrmE-Era-EngA-EngB-Septin-like GTPase superfamily. EngB GTPase family. Requires Mg(2+) as cofactor.

In terms of biological role, necessary for normal cell division and for the maintenance of normal septation. This Desulforamulus reducens (strain ATCC BAA-1160 / DSM 100696 / MI-1) (Desulfotomaculum reducens) protein is Probable GTP-binding protein EngB.